Consider the following 405-residue polypeptide: Nodal homolog 2-A (405 aa).

Positions 1-18 (MASLGVILFFVIASLIHG) are cleaved as a signal peptide. The propeptide occupies 19-282 (KPIHSERKAA…RVTDTRRPRR (264 aa)). Residues Asn71, Asn172, and Asn343 are each glycosylated (N-linked (GlcNAc...) asparagine). 3 disulfide bridges follow: Cys305/Cys371, Cys334/Cys402, and Cys338/Cys404.

It belongs to the TGF-beta family. As to quaternary structure, homodimer; disulfide-linked. Forms heterodimers with the TGF-beta family member derriere. Interacts with tsku; enhances nodal2 activity. First localized to the vegetal region of the blastula. Just prior to gastrulation (stage 10), this expression disappears and instead becomes localized to the dorsal marginal zone, with enrichment in the organizer.

It localises to the secreted. In terms of biological role, cooperation and regulatory loops of multiple nodals are essential for mesendoderm patterning in early embryos. Essential for mesoderm formation and axial patterning during embryonic development. Activates the activin-like signaling pathway to induce dorsal and ventral mesoderm in animal cap ectoderm. In addition, also dorsalizes ventral marginal zone (VMZ) tissues during gastrulation. Induces muscle actin. Appears to act as both a short-range and long-range morphogen. The unprocessed protein inhibits bmp- and wnt-signaling. The sequence is that of Nodal homolog 2-A (nodal2-a) from Xenopus laevis (African clawed frog).